We begin with the raw amino-acid sequence, 432 residues long: Cyclic di-GMP phosphodiesterase CdgJ (432 aa).

Residues 1–232 (MVRCLWAAEC…QRYVSPEHVI (232 aa)) form the EAL domain. One can recognise an HDOD domain in the interval 226–413 (VSPEHVIAMQ…CLELGFDLED (188 aa)).

The enzyme catalyses 3',3'-c-di-GMP + H2O = 5'-phosphoguanylyl(3'-&gt;5')guanosine + H(+). In terms of biological role, phosphodiesterase (PDE) that catalyzes the hydrolysis of cyclic diguanylate (c-di-GMP). Positively regulates motility and negatively regulates biofilm formation. The protein is Cyclic di-GMP phosphodiesterase CdgJ of Vibrio cholerae serotype O1 (strain ATCC 39315 / El Tor Inaba N16961).